Here is a 290-residue protein sequence, read N- to C-terminus: Probable protein phosphatase 2C 20 (290 aa).

A PPM-type phosphatase domain is found at 31–278; that stretch reads AHGYDFVKGK…DDISCIVPCF (248 aa). The Mn(2+) site is built by Asp68, Gly69, Asp230, and Asp269.

The protein belongs to the PP2C family. Mg(2+) serves as cofactor. Mn(2+) is required as a cofactor.

The catalysed reaction is O-phospho-L-seryl-[protein] + H2O = L-seryl-[protein] + phosphate. It carries out the reaction O-phospho-L-threonyl-[protein] + H2O = L-threonyl-[protein] + phosphate. Its function is as follows. May be involved in defense signaling. This Arabidopsis thaliana (Mouse-ear cress) protein is Probable protein phosphatase 2C 20 (PPC3-1.2).